Reading from the N-terminus, the 252-residue chain is Insulin-induced gene 1 protein (252 aa).

At 1-59 (MPRLESGAWSCSCAARARHAARPGEAAPKADAMQSPSPSAGRAEREASGGSATTWRQHL) the chain is on the cytoplasmic side. The disordered stretch occupies residues 22 to 48 (RPGEAAPKADAMQSPSPSAGRAEREAS). The helical transmembrane segment at 60–82 (VQRSVVLFVVGAFMALVLNLLQI) threads the bilayer. At 83–101 (QRNVTLFPDEVIATLFSSA) the chain is on the extracellular side. The chain crosses the membrane as a helical span at residues 102-119 (WWVPPCCGTAAAVVGLLY). At 120–134 (PCIDSHLGEPHKFKR) the chain is on the cytoplasmic side. A helical transmembrane segment spans residues 135 to 157 (EWASVMRCIAVFVGINHASAKLD). The Extracellular segment spans residues 158-160 (FAN). Residues 161–179 (NVQLSLTLAALSLGLWWTF) traverse the membrane as a helical segment. Residues 180–184 (DRSRS) lie on the Cytoplasmic side of the membrane. The chain crosses the membrane as a helical span at residues 185-206 (GLGLGITIAFVATLITQFLVYN). At 207–220 (GVYQYTSPDFLYIR) the chain is on the extracellular side. The chain crosses the membrane as a helical span at residues 221 to 238 (SWLPCIFFSGGVTVGNIG). At 239-252 (RQLAMGIPEKPHND) the chain is on the cytoplasmic side. The KxHxx signature appears at 246–252 (PEKPHND).

It belongs to the INSIG family. In terms of assembly, interacts with SCAP; interaction is direct and only takes place in the presence of sterols; it prevents interaction between SCAP and the coat protein complex II (COPII). Associates with the SCAP-SREBP complex; association is mediated via its interaction with SCAP and only takes place in the presence of sterols.

The protein resides in the endoplasmic reticulum membrane. Functionally, oxysterol-binding protein that mediates feedback control of cholesterol synthesis by controlling both endoplasmic reticulum to Golgi transport of SCAP and degradation of HMGCR. Acts as a negative regulator of cholesterol biosynthesis by mediating the retention of the SCAP-SREBP complex in the endoplasmic reticulum, thereby blocking the processing of sterol regulatory element-binding proteins (SREBPs). Binds oxysterol, including 25-hydroxycholesterol, regulating interaction with SCAP and retention of the SCAP-SREBP complex in the endoplasmic reticulum. In presence of oxysterol, interacts with SCAP, retaining the SCAP-SREBP complex in the endoplasmic reticulum, thereby preventing SCAP from escorting SREBPs to the Golgi. Sterol deprivation reduces oxysterol-binding, disrupting the interaction between INSIG1 and SCAP, thereby promoting Golgi transport of the SCAP-SREBP complex, followed by processing and nuclear translocation of SREBPs. Also regulates cholesterol synthesis by regulating degradation of HMGCR. The sequence is that of Insulin-induced gene 1 protein from Gallus gallus (Chicken).